The primary structure comprises 175 residues: Regenerating islet-derived protein 3-beta (175 aa).

The first 26 residues, 1–26 (MLPPTACSVMSWMLLSCLMLLSQVQG), serve as a signal peptide directing secretion. Residues 27 to 37 (EDSLKNIPSAR) constitute a propeptide that is removed on maturation. 3 cysteine pairs are disulfide-bonded: C40–C51, C68–C171, and C146–C163. One can recognise a C-type lectin domain in the interval 47 to 172 (YGSYCYALFQ…CEVKLPYVCK (126 aa)). H107 is a Zn(2+) binding site. The short motif at 114 to 116 (EPN) is the EPN element. E121 contacts Zn(2+).

In terms of assembly, forms a hexameric membrane-permeabilizing oligomeric pore on membrane phospholipids. The hexamer is formed by three dimers related by helical symmetry. Forms filaments, filamentation traps pore complexes and limits damage to host cells. Interacts with EXTL3. In terms of processing, proteolytic processing by trypsin removes an inhibitory N-terminal propeptide and is essential for peptidoglycan binding and antibacterial activity. As to expression, constitutively expressed in the small intestine, moderately in colon and at an extremely low level in healthy pancreas.

It is found in the secreted. With respect to regulation, lipopolysaccharide inhibits pore-forming activity, explaining why is bactericidal for Gram-positive but not Gram-negative bacteria. Functionally, bactericidal C-type lectin which acts against several intestinal Gram-positive and Gram-negative bacteria. Lacks antibacterial activity against S.typhimurium. May play a role in protection against infection with S.enteritidis by inhibiting its translocation from the gut lumen into intestinal tissues and further extraintestinal tissues. Acts as a hormone in response to different stimuli. Secreted by different cell types to activate its receptor EXTL3 and induce cell specific signaling pathways. In pancreas, is able stimulate cell proliferation. This Mus musculus (Mouse) protein is Regenerating islet-derived protein 3-beta.